Consider the following 629-residue polypeptide: Serine/threonine-protein kinase ICK (629 aa).

Residues 4-284 enclose the Protein kinase domain; sequence YTTIKQLGDG…ASQALRYPYF (281 aa). ATP is bound by residues 10-18 and K33; that span reads LGDGTYGSV. D125 functions as the Proton acceptor in the catalytic mechanism. T157 is subject to Phosphothreonine. A Phosphotyrosine modification is found at Y159. S161 carries the phosphoserine modification. Disordered stretches follow at residues 292-322, 454-482, and 579-629; these read ISTQ…PAQA, PSEP…QSTA, and GYSS…PSRR. A compositionally biased stretch (pro residues) spans 309–321; that stretch reads GPPPYVKPAPPAQ. A compositionally biased stretch (polar residues) spans 460 to 482; sequence TGTSVSTQASSQRRDTPTLQSTA.

It belongs to the protein kinase superfamily. CMGC Ser/Thr protein kinase family. CDC2/CDKX subfamily. It depends on Mg(2+) as a cofactor. Post-translationally, autophosphorylated on serine and threonine residues. Phosphorylation at Thr-157 increases kinase activity. In terms of tissue distribution, expressed in embryonic heart from day 11. Highly expressed in the uterus and at lower levels in brain, heart, lung, kidney, skeletal muscle, ovary and liver in adult tissues.

It is found in the cytoplasm. The protein localises to the cell projection. Its subcellular location is the cilium. The protein resides in the nucleus. It localises to the cytoskeleton. It is found in the cilium basal body. It catalyses the reaction L-seryl-[protein] + ATP = O-phospho-L-seryl-[protein] + ADP + H(+). It carries out the reaction L-threonyl-[protein] + ATP = O-phospho-L-threonyl-[protein] + ADP + H(+). In terms of biological role, required for ciliogenesis, particularly in neuronal and retinal progenitor cells. Phosphorylates KIF3A. Involved in the control of ciliary length. Regulates the ciliary localization of SHH pathway components as well as the localization of IFT components at ciliary tips. May play a role in cardiac development. Regulates intraflagellar transport (IFT) speed and negatively regulates cilium length in a cAMP and mTORC1 signaling-dependent manner and this regulation requires its kinase activity. The chain is Serine/threonine-protein kinase ICK (Cilk1) from Rattus norvegicus (Rat).